The following is a 368-amino-acid chain: Phospho-N-acetylmuramoyl-pentapeptide-transferase (368 aa).

10 helical membrane passes run 34–54 (GAVV…IDHL), 79–99 (TPTM…VLWA), 102–122 (LNPY…VGFY), 140–160 (ARIL…VRLG), 176–196 (LVIK…VGAG), 207–227 (GLAI…AYLA), 247–267 (LAVL…FNAP), 271–291 (IFMG…IAVA), 296–316 (IVLA…IVQV), and 345–365 (QIVI…LSTL).

This sequence belongs to the glycosyltransferase 4 family. MraY subfamily. The cofactor is Mg(2+).

It localises to the cell inner membrane. It carries out the reaction UDP-N-acetyl-alpha-D-muramoyl-L-alanyl-gamma-D-glutamyl-meso-2,6-diaminopimeloyl-D-alanyl-D-alanine + di-trans,octa-cis-undecaprenyl phosphate = di-trans,octa-cis-undecaprenyl diphospho-N-acetyl-alpha-D-muramoyl-L-alanyl-D-glutamyl-meso-2,6-diaminopimeloyl-D-alanyl-D-alanine + UMP. The protein operates within cell wall biogenesis; peptidoglycan biosynthesis. In terms of biological role, catalyzes the initial step of the lipid cycle reactions in the biosynthesis of the cell wall peptidoglycan: transfers peptidoglycan precursor phospho-MurNAc-pentapeptide from UDP-MurNAc-pentapeptide onto the lipid carrier undecaprenyl phosphate, yielding undecaprenyl-pyrophosphoryl-MurNAc-pentapeptide, known as lipid I. The chain is Phospho-N-acetylmuramoyl-pentapeptide-transferase from Bradyrhizobium sp. (strain BTAi1 / ATCC BAA-1182).